A 159-amino-acid chain; its full sequence is MEKLTEKEKELIRVSWESLGKDKVPHGVIMFSRLFELEPALLNLFHYNTNCGTIQDCLSSPEFLDHVTKVMLVIDAAVSHLDNLHTLEDFLLNLGKKHQAVGVNTQSFAVVGESLLYMLQCSLGQGYTAPLRQAWLNMYTIVVAAMSRGWAKNGEHKTD.

The Globin domain occupies 3-151; the sequence is KLTEKEKELI…VVAAMSRGWA (149 aa). The heme b site is built by His-66 and His-98.

It belongs to the globin family. In terms of assembly, monomer. Homodimers and homotetramers. Mainly monomeric but also detected as part of homodimers and homotetramers.

The protein resides in the cytoplasm. The protein localises to the cytosol. It localises to the mitochondrion matrix. It carries out the reaction Fe(III)-heme b-[protein] + nitric oxide + H2O = Fe(II)-heme b-[protein] + nitrite + 2 H(+). Functionally, monomeric globin with a bis-histidyl six-coordinate heme-iron atom through which it can bind dioxygen, carbon monoxide and nitric oxide. Could help transport oxygen and increase its availability to the metabolically active neuronal tissues, though its low quantity in tissues as well as its high affinity for dioxygen, which may limit its oxygen-releasing ability, argue against it. The ferrous/deoxygenated form exhibits a nitrite reductase activity and it could produce nitric oxide which in turn inhibits cellular respiration in response to hypoxia. In its ferrous/deoxygenated state, it may also exhibit GDI (Guanine nucleotide Dissociation Inhibitor) activity toward heterotrimeric G-alpha proteins, thereby regulating signal transduction to facilitate neuroprotective responses in the wake of hypoxia and associated oxidative stress. The protein is Neuroglobin-1 (ngb1) of Oncorhynchus mykiss (Rainbow trout).